Consider the following 321-residue polypeptide: Ribosomal RNA small subunit methyltransferase H (321 aa).

S-adenosyl-L-methionine contacts are provided by residues 40–42, Asp-60, Phe-84, Asp-106, and Gln-113; that span reads GGH.

Belongs to the methyltransferase superfamily. RsmH family.

It is found in the cytoplasm. The enzyme catalyses cytidine(1402) in 16S rRNA + S-adenosyl-L-methionine = N(4)-methylcytidine(1402) in 16S rRNA + S-adenosyl-L-homocysteine + H(+). In terms of biological role, specifically methylates the N4 position of cytidine in position 1402 (C1402) of 16S rRNA. This chain is Ribosomal RNA small subunit methyltransferase H, found in Haemophilus influenzae (strain PittEE).